The following is a 258-amino-acid chain: Deoxyribose-phosphate aldolase (258 aa).

D101 serves as the catalytic Proton donor/acceptor. K166 serves as the catalytic Schiff-base intermediate with acetaldehyde. The active-site Proton donor/acceptor is the K200.

It belongs to the DeoC/FbaB aldolase family. DeoC type 2 subfamily.

The protein resides in the cytoplasm. It carries out the reaction 2-deoxy-D-ribose 5-phosphate = D-glyceraldehyde 3-phosphate + acetaldehyde. Its pathway is carbohydrate degradation; 2-deoxy-D-ribose 1-phosphate degradation; D-glyceraldehyde 3-phosphate and acetaldehyde from 2-deoxy-alpha-D-ribose 1-phosphate: step 2/2. Catalyzes a reversible aldol reaction between acetaldehyde and D-glyceraldehyde 3-phosphate to generate 2-deoxy-D-ribose 5-phosphate. The polypeptide is Deoxyribose-phosphate aldolase (Actinobacillus pleuropneumoniae serotype 7 (strain AP76)).